The chain runs to 298 residues: Formylmethanofuran--tetrahydromethanopterin formyltransferase (298 aa).

Belongs to the FTR family. In terms of assembly, homotetramer.

The protein localises to the cytoplasm. The catalysed reaction is N-formylmethanofuran + 5,6,7,8-tetrahydromethanopterin + H(+) = N(5)-formyl-5,6,7,8-tetrahydromethanopterin + methanofuran. Its pathway is one-carbon metabolism; formaldehyde degradation; formate from formaldehyde (H(4)MPT route): step 4/5. Functionally, catalyzes the transfer of a formyl group from 5-formyl tetrahydromethanopterin (5-formyl-H(4)MPT) to methanofuran (MFR) to produce formylmethanofuran (formyl-MFR) and tetrahydromethanopterin (H(4)MPT). This Methylococcus capsulatus (strain ATCC 33009 / NCIMB 11132 / Bath) protein is Formylmethanofuran--tetrahydromethanopterin formyltransferase.